A 158-amino-acid chain; its full sequence is MAKRSIKSETSPELQLGRPVTAPDSPETARLDRVPNPQKDTDYLARFTVPEFTSLCPVTGQPDFAHLVIDYAPGPWLVESKSLKLYLASFRNHGAFHEDCTVAIGKRLATELKPKWLRIGGYWYPRGGIPIDVFWQTGKLPKGLWVPDQGVAPYRGRG.

The disordered stretch occupies residues 1–37 (MAKRSIKSETSPELQLGRPVTAPDSPETARLDRVPNP). Basic and acidic residues predominate over residues 27–37 (ETARLDRVPNP). Cysteine 56 acts as the Thioimide intermediate in catalysis. Residue aspartate 63 is the Proton donor of the active site. Substrate contacts are provided by residues 78–80 (VES) and 97–98 (HE).

This sequence belongs to the GTP cyclohydrolase I family. QueF type 1 subfamily.

The protein resides in the cytoplasm. The catalysed reaction is 7-aminomethyl-7-carbaguanine + 2 NADP(+) = 7-cyano-7-deazaguanine + 2 NADPH + 3 H(+). It functions in the pathway tRNA modification; tRNA-queuosine biosynthesis. Catalyzes the NADPH-dependent reduction of 7-cyano-7-deazaguanine (preQ0) to 7-aminomethyl-7-deazaguanine (preQ1). The protein is NADPH-dependent 7-cyano-7-deazaguanine reductase of Bradyrhizobium sp. (strain BTAi1 / ATCC BAA-1182).